Here is a 291-residue protein sequence, read N- to C-terminus: Mitochondrial fission factor (291 aa).

Topologically, residues 1–271 are cytoplasmic; it reads MAEISRIQYE…ENKERAKREM (271 aa). Thr89 is modified (phosphothreonine). Residues 106–134 form a disordered region; sequence LERPLPTPQSEESRAVGRLKRERSMSENA. A phosphoserine mark is found at Ser129, Ser131, and Ser146. Thr149 carries the post-translational modification Phosphothreonine. A phosphoserine mark is found at Ser151, Ser178, Ser182, and Ser244. Positions 240–271 form a coiled coil; sequence VDAASLRRQIIKLNRRLQLLEEENKERAKREM. A helical; Anchor for type IV membrane protein transmembrane segment spans residues 272–289; it reads VMYSITVAFWLLNSWLWF. The Mitochondrial intermembrane portion of the chain corresponds to 290–291; the sequence is RR.

The protein belongs to the Tango11 family. Homodimer. Interacts with DNM1L. Interacts with C11orf65/MFI; the interaction inhibits MFF interaction with DNM1L.

It is found in the mitochondrion outer membrane. The protein localises to the peroxisome. It localises to the cytoplasmic vesicle. Its subcellular location is the secretory vesicle. The protein resides in the synaptic vesicle. In terms of biological role, plays a role in mitochondrial and peroxisomal fission. Promotes the recruitment and association of the fission mediator dynamin-related protein 1 (DNM1L) to the mitochondrial surface. May be involved in regulation of synaptic vesicle membrane dynamics by recruitment of DNM1L to clathrin-containing vesicles. The chain is Mitochondrial fission factor (Mff) from Mus musculus (Mouse).